A 257-amino-acid chain; its full sequence is Snake venom serine protease CL5 (257 aa).

An N-terminal signal peptide occupies residues 1–18; it reads MVLIRVLANLLILQLSYA. Residues 19-24 constitute a propeptide that is removed on maturation; it reads QRSSEL. In terms of domain architecture, Peptidase S1 spans 25–248; that stretch reads VIGGDECNIN…HLDWIQSIIA (224 aa). Cystine bridges form between Cys-31/Cys-162, Cys-49/Cys-65, Cys-141/Cys-209, Cys-173/Cys-188, and Cys-199/Cys-224. His-64 functions as the Charge relay system in the catalytic mechanism. N-linked (GlcNAc...) asparagine glycosylation is found at Asn-78 and Asn-102. Catalysis depends on Asp-109, which acts as the Charge relay system. Asn-153 and Asn-169 each carry an N-linked (GlcNAc...) asparagine glycan. The active-site Charge relay system is the Ser-203. N-linked (GlcNAc...) asparagine glycosylation is present at Asn-250.

Belongs to the peptidase S1 family. Snake venom subfamily. As to quaternary structure, monomer. As to expression, expressed by the venom gland.

Its subcellular location is the secreted. In terms of biological role, snake venom serine protease that may act in the hemostasis system of the prey. The chain is Snake venom serine protease CL5 from Trimeresurus stejnegeri (Chinese green tree viper).